The sequence spans 932 residues: MADYRKTLNLPDTAFPMRGDLPKREPGWIAAWQQQKLYQKIRKAAAGRPKFVLHDGPPYANGNLHLGHALNKILKDIIVRSKTLAGFDAPYVPGWDCHGLPIEHKVEVTHGKNLPADKVRELCRAYAAEQVEIQKKEFIRLGVLGDWDNPYLTMNFANEAGEVRALAEMVKAGYVFKGLKPVNWCFDCGSALAEAEVEYADKVSPAVDVGFPCAEPDRLADAFGLAPLTKPALAVIWTTTPWTIPANQALNMHPEFDYALVDTGERYLVLAHDLVGACLERYGLNGRIVATCKGAALDRVAFRHPFYDRLSPVFLGDYVTLDAGTGVVHSAPAYGLEDFQSCRANGMQSDDILTPVMGDGRYAPDLPFFGGMNIWKANPEITAKLREVGCLLAEAKITHSYMHCWRHKTPLIYRATAQWFVGMDKPVADGSTLRERALRGVEATRFFPAWGQSRLHAMIANRPDWCISRQRNWGVPIPFFLHKETGELHPRTVELMEEVAKRIEQEGIEAWFKLDAAELLGAEAAQYEKISDTLDVWFDSGTTHWHVLRGSHNDGHVEGPRADLYLEGSDQHRGWFHSSLLTGCAIDGHPPYNALLTHGFTVDQQGRKMSKSLGNTILPQEVSEKMGAEILRLWVASTDYSGELSISKEILDRVVEVYRRVRNTLRFLLANTADFDIAKDAVPLEQWLDIDRYALAFTRQLAQQAEADYARFEFHRIVQALQVFCAEDLGAFYLDILKDRLYTTAAGSQARRAAQTALWHITQTLLKLMAPILSFTAEEAWAVLNPGKEDSVMLHTFHALPAQEGEAGLVARWETIRAVRAEALKVIEALRTEGKVGASLQAELELRLTADKYTAMQSLGEDLRFVTMTSRATLLEAASAEAEAIVATPSARTKCERCWHYTDDVGHNAEHPTLCARCADNLYGAGETRTHA.

Residues 58 to 68 (PYANGNLHLGH) carry the 'HIGH' region motif. Glu-567 serves as a coordination point for L-isoleucyl-5'-AMP. The short motif at 608–612 (KMSKS) is the 'KMSKS' region element. Lys-611 is a binding site for ATP. Positions 895, 898, 915, and 918 each coordinate Zn(2+).

Belongs to the class-I aminoacyl-tRNA synthetase family. IleS type 1 subfamily. In terms of assembly, monomer. Requires Zn(2+) as cofactor.

The protein localises to the cytoplasm. It catalyses the reaction tRNA(Ile) + L-isoleucine + ATP = L-isoleucyl-tRNA(Ile) + AMP + diphosphate. Its function is as follows. Catalyzes the attachment of isoleucine to tRNA(Ile). As IleRS can inadvertently accommodate and process structurally similar amino acids such as valine, to avoid such errors it has two additional distinct tRNA(Ile)-dependent editing activities. One activity is designated as 'pretransfer' editing and involves the hydrolysis of activated Val-AMP. The other activity is designated 'posttransfer' editing and involves deacylation of mischarged Val-tRNA(Ile). The sequence is that of Isoleucine--tRNA ligase from Azoarcus sp. (strain BH72).